We begin with the raw amino-acid sequence, 153 residues long: Inner membrane protein YjiG (153 aa).

Residues 1 to 31 are Periplasmic-facing; that stretch reads MTTQVRKNVMDMFIDGARRGFTIATTNLLPN. A helical transmembrane segment spans residues 32 to 52; that stretch reads VVMAFVIIQALKITGLLDWVG. Residues 53–68 are Cytoplasmic-facing; that stretch reads HICEPVMALWGLPGEA. The next 2 membrane-spanning stretches (helical) occupy residues 69–89 and 90–110; these read ATVLLAALMSMGGAVGVAASL and ATAGALTGHDVTVLLPAMYLM. At 111 to 132 the chain is on the cytoplasmic side; the sequence is GNPVQNVGRCLGTAEVNAKYYP. A helical transmembrane segment spans residues 133 to 153; that stretch reads HIITVCVINALLSIWVMQLIV.

The protein belongs to the SpmB family.

It is found in the cell inner membrane. This chain is Inner membrane protein YjiG (yjiG), found in Escherichia coli O157:H7.